The sequence spans 117 residues: SPbeta prophage-derived uncharacterized protein YosL (117 aa).

This chain is SPbeta prophage-derived uncharacterized protein YosL (yosL), found in Bacillus subtilis (strain 168).